A 347-amino-acid polypeptide reads, in one-letter code: NADH-ubiquinone oxidoreductase chain 2 (347 aa).

The next 11 membrane-spanning stretches (helical) occupy residues Ser2 to Ile22, His25 to Thr45, Ala56 to Phe76, Phe96 to Pro116, Ile122 to Phe142, Leu149 to Gly169, Ile178 to Tyr197, Ile202 to Leu219, Met241 to Met261, Leu278 to Tyr298, and Ile323 to Phe343.

The protein belongs to the complex I subunit 2 family. Core subunit of respiratory chain NADH dehydrogenase (Complex I) which is composed of 45 different subunits. Interacts with TMEM242.

Its subcellular location is the mitochondrion inner membrane. The enzyme catalyses a ubiquinone + NADH + 5 H(+)(in) = a ubiquinol + NAD(+) + 4 H(+)(out). Functionally, core subunit of the mitochondrial membrane respiratory chain NADH dehydrogenase (Complex I) which catalyzes electron transfer from NADH through the respiratory chain, using ubiquinone as an electron acceptor. Essential for the catalytic activity and assembly of complex I. The polypeptide is NADH-ubiquinone oxidoreductase chain 2 (Metachirus nudicaudatus (Brown four-eyed opossum)).